The sequence spans 264 residues: Probable pectate lyase D (264 aa).

A signal peptide spans 1–17 (MFFKQLAVLSFATSALA). An N-linked (GlcNAc...) asparagine glycan is attached at Asn60. The segment at 234–264 (YEGTDNNDEEPQEISTGPSNACQYTDPLPSC) is disordered. Residues 235 to 245 (EGTDNNDEEPQ) are compositionally biased toward acidic residues. Over residues 246–256 (EISTGPSNACQ) the composition is skewed to polar residues.

It belongs to the polysaccharide lyase 3 family. The cofactor is Ca(2+).

Its subcellular location is the secreted. It carries out the reaction Eliminative cleavage of (1-&gt;4)-alpha-D-galacturonan to give oligosaccharides with 4-deoxy-alpha-D-galact-4-enuronosyl groups at their non-reducing ends.. Functionally, pectinolytic enzyme consist of four classes of enzymes: pectin lyase, polygalacturonase, pectin methylesterase and rhamnogalacturonase. Among pectinolytic enzymes, pectin lyase is the most important in depolymerization of pectin, since it cleaves internal glycosidic bonds of highly methylated pectins. Favors pectate, the anion, over pectin, the methyl ester. The chain is Probable pectate lyase D (plyD) from Emericella nidulans (strain FGSC A4 / ATCC 38163 / CBS 112.46 / NRRL 194 / M139) (Aspergillus nidulans).